The primary structure comprises 266 residues: MAYKEVTRDELSAAGVQYGHQTKRWNPKMAPFIYGSKSKNHVIDLEKTLIQLRQAEKLVQSIGAKGEKVLFVGTRRSAKLAVKEAALRSGNYYVNQRWLGGTLTNFKTIVKRIKALWEIEESEKNGQLALRTKKEQILILKEKANLEKSLGGIKQMRKLPAALIVVDPKSDEIAVKEAIKLNIPVIGLCDTNVDPDIVTLPIPANDDLQESVNIMINALVDAFADGANLKLAPSVLKTVVVKRERTEGENNYSNNRSWNKPERTNN.

Positions 247–266 are disordered; sequence EGENNYSNNRSWNKPERTNN. Over residues 249–258 the composition is skewed to polar residues; it reads ENNYSNNRSW.

Belongs to the universal ribosomal protein uS2 family.

This Mesoplasma florum (strain ATCC 33453 / NBRC 100688 / NCTC 11704 / L1) (Acholeplasma florum) protein is Small ribosomal subunit protein uS2.